Reading from the N-terminus, the 431-residue chain is MPKLTRSAELFEKAKKFIPGGVNSPVRAFKSVGGNPIFMAKGQGAYMTDVDGNTYLDYVGSWGPFILGSMHPRITAALERTLTTIGTSFGTPIEMEIEIAELLVEIVPSIEMVRMVNSGTEATMSAVRLARGCTGRDKIIKFEGCYHGHGDSFLIKAGSGALTLGAPDSPGVTKGTAEDTLNAKYNDIASVELLVAENKGNIAAIIIEPVAGNTGVIPAKKEFLQALRDLCDREGIVLIFDEVMCGFRVALGGAQELYGITPDLTTMGKIIGGGLPVGAFGGKRSLMENVAPLGGVYQAGTLSGNPLALTAGIETLKILKDENPYPELERKAAFLEAGFRDNMQKLGLNFVQNRVGSMACLFFTETPVESYDSAITCDTEMFGRYFTSMLDQGIYLAPSQFEAMFTSAVHSNADLEKTVKANYIALQAAAK.

Lys-269 carries the N6-(pyridoxal phosphate)lysine modification.

The protein belongs to the class-III pyridoxal-phosphate-dependent aminotransferase family. HemL subfamily. In terms of assembly, homodimer. The cofactor is pyridoxal 5'-phosphate.

The protein localises to the cytoplasm. It catalyses the reaction (S)-4-amino-5-oxopentanoate = 5-aminolevulinate. The protein operates within porphyrin-containing compound metabolism; protoporphyrin-IX biosynthesis; 5-aminolevulinate from L-glutamyl-tRNA(Glu): step 2/2. It participates in porphyrin-containing compound metabolism; chlorophyll biosynthesis. This Chlorobium phaeovibrioides (strain DSM 265 / 1930) (Prosthecochloris vibrioformis (strain DSM 265)) protein is Glutamate-1-semialdehyde 2,1-aminomutase.